A 77-amino-acid chain; its full sequence is Acyl carrier protein (77 aa).

The region spanning 2 to 77 is the Carrier domain; sequence AEVFDRVKEI…DAVDYINSKA (76 aa). At S37 the chain carries O-(pantetheine 4'-phosphoryl)serine.

It belongs to the acyl carrier protein (ACP) family. Post-translationally, 4'-phosphopantetheine is transferred from CoA to a specific serine of apo-ACP by AcpS. This modification is essential for activity because fatty acids are bound in thioester linkage to the sulfhydryl of the prosthetic group.

Its subcellular location is the cytoplasm. The protein operates within lipid metabolism; fatty acid biosynthesis. In terms of biological role, carrier of the growing fatty acid chain in fatty acid biosynthesis. In Oceanobacillus iheyensis (strain DSM 14371 / CIP 107618 / JCM 11309 / KCTC 3954 / HTE831), this protein is Acyl carrier protein.